The following is a 448-amino-acid chain: Arginine synthetase ArcE (448 aa).

In terms of assembly, probably forms homotetramers and higher assemblies of tetramers. Mg(2+) is required as a cofactor.

It catalyses the reaction L-arginine + ADP + phosphate + H(+) = L-citrulline + NH4(+) + ATP. It functions in the pathway amino-acid biosynthesis; L-proline biosynthesis. The protein operates within amino-acid degradation; L-arginine degradation. Its pathway is amino-acid biosynthesis; L-arginine biosynthesis. Functionally, arginine deiminase involved in an arginine synthetase pathway, which provides citrulline and ornithine, the precursors for proline biosynthesis. Catalyzes the conversion of L-arginine to citrulline while conserving the energy of arginine deimination to generate ATP from ADP and free phosphate. Is specific toward L-arginine and cannot use D-arginine, agmatine, guanidine, L-alanine-L-arginine dipeptide and L-arginine-L-alanine dipeptide. Can also use CDP, GDP or UDP, with lower activity (38%, 8.4% and 13.3%, respectively). The enzyme can also catalyze the reverse reaction: the ATP-dependent generation of arginine from citrulline in a single reaction by using free ammonia, without the requirement of aspartic acid. In vivo, most likely functions in the arginine catabolism to produce citrulline for proline biosynthesis while also generating ATP, but it can also contribute to arginine biosynthesis when the necessary precursors such as citrulline are abundant. This is Arginine synthetase ArcE from Thermococcus kodakarensis (strain ATCC BAA-918 / JCM 12380 / KOD1) (Pyrococcus kodakaraensis (strain KOD1)).